Reading from the N-terminus, the 274-residue chain is Formamidopyrimidine-DNA glycosylase (274 aa).

P2 (schiff-base intermediate with DNA) is an active-site residue. E3 (proton donor) is an active-site residue. K57 functions as the Proton donor; for beta-elimination activity in the catalytic mechanism. Residues H92, R111, and K152 each contribute to the DNA site. The FPG-type zinc finger occupies 237–271 (QVYGRKGEECRECGTLIQAKVIGQRNSYFCPDCQP). R261 serves as the catalytic Proton donor; for delta-elimination activity.

It belongs to the FPG family. As to quaternary structure, monomer. Zn(2+) serves as cofactor.

The enzyme catalyses Hydrolysis of DNA containing ring-opened 7-methylguanine residues, releasing 2,6-diamino-4-hydroxy-5-(N-methyl)formamidopyrimidine.. The catalysed reaction is 2'-deoxyribonucleotide-(2'-deoxyribose 5'-phosphate)-2'-deoxyribonucleotide-DNA = a 3'-end 2'-deoxyribonucleotide-(2,3-dehydro-2,3-deoxyribose 5'-phosphate)-DNA + a 5'-end 5'-phospho-2'-deoxyribonucleoside-DNA + H(+). Functionally, involved in base excision repair of DNA damaged by oxidation or by mutagenic agents. Acts as a DNA glycosylase that recognizes and removes damaged bases. Has a preference for oxidized purines, such as 7,8-dihydro-8-oxoguanine (8-oxoG). Has AP (apurinic/apyrimidinic) lyase activity and introduces nicks in the DNA strand. Cleaves the DNA backbone by beta-delta elimination to generate a single-strand break at the site of the removed base with both 3'- and 5'-phosphates. This Haemophilus ducreyi (strain 35000HP / ATCC 700724) protein is Formamidopyrimidine-DNA glycosylase.